The chain runs to 546 residues: Chaperonin GroEL 2 (546 aa).

ATP-binding positions include Thr30–Pro33, Lys51, Asp87–Thr91, Gly415, and Asp495. The tract at residues Asp527–Phe546 is disordered. Gly residues predominate over residues Gly535–Phe546.

It belongs to the chaperonin (HSP60) family. Forms a cylinder of 14 subunits composed of two heptameric rings stacked back-to-back. Interacts with the co-chaperonin GroES.

It localises to the cytoplasm. It catalyses the reaction ATP + H2O + a folded polypeptide = ADP + phosphate + an unfolded polypeptide.. Its function is as follows. Together with its co-chaperonin GroES, plays an essential role in assisting protein folding. The GroEL-GroES system forms a nano-cage that allows encapsulation of the non-native substrate proteins and provides a physical environment optimized to promote and accelerate protein folding. The protein is Chaperonin GroEL 2 of Burkholderia ambifaria (strain ATCC BAA-244 / DSM 16087 / CCUG 44356 / LMG 19182 / AMMD) (Burkholderia cepacia (strain AMMD)).